A 202-amino-acid chain; its full sequence is UPF0056 membrane protein PH0214 (202 aa).

Helical transmembrane passes span 5-25, 47-67, 76-96, 104-124, 135-155, and 174-194; these read ILSSALLMLIMIDPSDKILLV, IGFILLLLFAVAGKIILQDIF, VAGGFVLFKIGLEALEGGGMV, ILALAAVPVATPLIAGPAAIT, IIVSIVGTLIAIAITAALMMI, and IIGLFIMAIGAQMMITGAGGI.

The protein belongs to the UPF0056 (MarC) family.

The protein localises to the cell membrane. The protein is UPF0056 membrane protein PH0214 of Pyrococcus horikoshii (strain ATCC 700860 / DSM 12428 / JCM 9974 / NBRC 100139 / OT-3).